The primary structure comprises 190 residues: Ribosome-recycling factor (190 aa).

The protein belongs to the RRF family.

The protein resides in the cytoplasm. Its function is as follows. Responsible for the release of ribosomes from messenger RNA at the termination of protein biosynthesis. May increase the efficiency of translation by recycling ribosomes from one round of translation to another. This Fusobacterium nucleatum subsp. nucleatum (strain ATCC 25586 / DSM 15643 / BCRC 10681 / CIP 101130 / JCM 8532 / KCTC 2640 / LMG 13131 / VPI 4355) protein is Ribosome-recycling factor.